We begin with the raw amino-acid sequence, 206 residues long: Thiamine-phosphate synthase (206 aa).

Residues 38-42 and Asn70 contribute to the 4-amino-2-methyl-5-(diphosphooxymethyl)pyrimidine site; that span reads QLREK. 2 residues coordinate Mg(2+): Asp71 and Asp90. Residue Thr109 coordinates 4-amino-2-methyl-5-(diphosphooxymethyl)pyrimidine. 2-[(2R,5Z)-2-carboxy-4-methylthiazol-5(2H)-ylidene]ethyl phosphate is bound at residue 135 to 137; it reads TST. Lys138 contacts 4-amino-2-methyl-5-(diphosphooxymethyl)pyrimidine. Residues Gly165 and 185-186 each bind 2-[(2R,5Z)-2-carboxy-4-methylthiazol-5(2H)-ylidene]ethyl phosphate; that span reads VS.

It belongs to the thiamine-phosphate synthase family. The cofactor is Mg(2+).

The catalysed reaction is 2-[(2R,5Z)-2-carboxy-4-methylthiazol-5(2H)-ylidene]ethyl phosphate + 4-amino-2-methyl-5-(diphosphooxymethyl)pyrimidine + 2 H(+) = thiamine phosphate + CO2 + diphosphate. It catalyses the reaction 2-(2-carboxy-4-methylthiazol-5-yl)ethyl phosphate + 4-amino-2-methyl-5-(diphosphooxymethyl)pyrimidine + 2 H(+) = thiamine phosphate + CO2 + diphosphate. It carries out the reaction 4-methyl-5-(2-phosphooxyethyl)-thiazole + 4-amino-2-methyl-5-(diphosphooxymethyl)pyrimidine + H(+) = thiamine phosphate + diphosphate. Its pathway is cofactor biosynthesis; thiamine diphosphate biosynthesis; thiamine phosphate from 4-amino-2-methyl-5-diphosphomethylpyrimidine and 4-methyl-5-(2-phosphoethyl)-thiazole: step 1/1. Condenses 4-methyl-5-(beta-hydroxyethyl)thiazole monophosphate (THZ-P) and 2-methyl-4-amino-5-hydroxymethyl pyrimidine pyrophosphate (HMP-PP) to form thiamine monophosphate (TMP). This Fusobacterium nucleatum subsp. nucleatum (strain ATCC 25586 / DSM 15643 / BCRC 10681 / CIP 101130 / JCM 8532 / KCTC 2640 / LMG 13131 / VPI 4355) protein is Thiamine-phosphate synthase.